Consider the following 270-residue polypeptide: NAD kinase (270 aa).

Catalysis depends on aspartate 45, which acts as the Proton acceptor. NAD(+) is bound by residues 45-46, 121-122, lysine 147, aspartate 149, 160-165, and alanine 184; these read DG, NE, and TAYSKS.

This sequence belongs to the NAD kinase family. A divalent metal cation is required as a cofactor.

It is found in the cytoplasm. The enzyme catalyses NAD(+) + ATP = ADP + NADP(+) + H(+). Functionally, involved in the regulation of the intracellular balance of NAD and NADP, and is a key enzyme in the biosynthesis of NADP. Catalyzes specifically the phosphorylation on 2'-hydroxyl of the adenosine moiety of NAD to yield NADP. This is NAD kinase from Lactobacillus johnsonii (strain CNCM I-12250 / La1 / NCC 533).